A 110-amino-acid chain; its full sequence is Large ribosomal subunit protein uL22 (110 aa).

Belongs to the universal ribosomal protein uL22 family. As to quaternary structure, part of the 50S ribosomal subunit.

This protein binds specifically to 23S rRNA; its binding is stimulated by other ribosomal proteins, e.g. L4, L17, and L20. It is important during the early stages of 50S assembly. It makes multiple contacts with different domains of the 23S rRNA in the assembled 50S subunit and ribosome. In terms of biological role, the globular domain of the protein is located near the polypeptide exit tunnel on the outside of the subunit, while an extended beta-hairpin is found that lines the wall of the exit tunnel in the center of the 70S ribosome. In Pseudoalteromonas translucida (strain TAC 125), this protein is Large ribosomal subunit protein uL22.